A 261-amino-acid chain; its full sequence is uncharacterized protein (261 aa).

The N-terminal stretch at 1–22 (MRDSKRVVLYISIIVLSIFIIG) is a signal peptide. Cys-23 carries N-palmitoyl cysteine lipidation. The S-diacylglycerol cysteine moiety is linked to residue Cys-23.

It belongs to the staphylococcal tandem lipoprotein family.

Its subcellular location is the cell membrane. This is an uncharacterized protein from Staphylococcus aureus (strain Mu50 / ATCC 700699).